The chain runs to 300 residues: tRNA pseudouridine synthase B (300 aa).

The active-site Nucleophile is D38.

It belongs to the pseudouridine synthase TruB family. Type 1 subfamily.

It catalyses the reaction uridine(55) in tRNA = pseudouridine(55) in tRNA. Functionally, responsible for synthesis of pseudouridine from uracil-55 in the psi GC loop of transfer RNAs. This is tRNA pseudouridine synthase B from Dehalococcoides mccartyi (strain ATCC BAA-2100 / JCM 16839 / KCTC 5957 / BAV1).